We begin with the raw amino-acid sequence, 434 residues long: Nicotinate phosphoribosyltransferase (434 aa).

His-242 is subject to Phosphohistidine; by autocatalysis.

This sequence belongs to the NAPRTase family. Transiently phosphorylated on a His residue during the reaction cycle. Phosphorylation strongly increases the affinity for substrates and increases the rate of nicotinate D-ribonucleotide production. Dephosphorylation regenerates the low-affinity form of the enzyme, leading to product release.

It catalyses the reaction nicotinate + 5-phospho-alpha-D-ribose 1-diphosphate + ATP + H2O = nicotinate beta-D-ribonucleotide + ADP + phosphate + diphosphate. It functions in the pathway cofactor biosynthesis; NAD(+) biosynthesis; nicotinate D-ribonucleotide from nicotinate: step 1/1. Its function is as follows. Catalyzes the synthesis of beta-nicotinate D-ribonucleotide from nicotinate and 5-phospho-D-ribose 1-phosphate at the expense of ATP. The polypeptide is Nicotinate phosphoribosyltransferase (Chelativorans sp. (strain BNC1)).